The sequence spans 1029 residues: Tyrosine-protein kinase-like otk (1029 aa).

The signal sequence occupies residues methionine 1 to alanine 18. Topologically, residues serine 19 to alanine 577 are extracellular. Ig-like C2-type domains are found at residues serine 21–serine 104, proline 105–serine 195, proline 247–serine 361, proline 364–asparagine 459, and proline 464–valine 554. N-linked (GlcNAc...) asparagine glycosylation occurs at asparagine 35. Disulfide bonds link cysteine 42–cysteine 91, cysteine 133–cysteine 184, cysteine 272–cysteine 350, and cysteine 395–cysteine 443. N-linked (GlcNAc...) asparagine glycosylation is found at asparagine 332, asparagine 413, asparagine 425, asparagine 440, asparagine 453, asparagine 508, and asparagine 520. Cysteine 486 and cysteine 538 are joined by a disulfide. A helical membrane pass occupies residues valine 578 to tryptophan 598. Topologically, residues cysteine 599 to lysine 1029 are cytoplasmic. 2 disordered regions span residues leucine 613 to alanine 675 and serine 714 to methionine 756. Residues lysine 651 to arginine 669 are compositionally biased toward polar residues. Residue serine 674 is modified to Phosphoserine. A Protein kinase; inactive domain is found at leucine 688–methionine 1024. The segment covering serine 716–serine 727 has biased composition (basic and acidic residues).

Belongs to the protein kinase superfamily. Tyr protein kinase family. Insulin receptor subfamily. Interacts with plexA; component of a receptor complex that mediates the repulsive signaling in response to Semaphorin ligands.

The protein localises to the cell membrane. Functionally, acts as a calcium-dependent, homophilic cell adhesion molecule that regulates neural recognition during the development of the nervous system. Component of the repulsive Plexin signaling response to regulate motor axon guidance at the embryonic stage. Also component of a receptor complex that is required in the adult visual system to innervate the lamina layer; specific targeting of R1-R6 axons. This chain is Tyrosine-protein kinase-like otk, found in Drosophila sechellia (Fruit fly).